A 195-amino-acid chain; its full sequence is Thymidine kinase (195 aa).

Residues 15-22 (GSMFSGKS) and 88-91 (DEVQ) contribute to the ATP site. The active-site Proton acceptor is the Glu-89. Zn(2+) is bound by residues Cys-145, Cys-148, Cys-183, and Cys-186.

This sequence belongs to the thymidine kinase family. In terms of assembly, homotetramer.

It localises to the cytoplasm. It catalyses the reaction thymidine + ATP = dTMP + ADP + H(+). In Bacillus cereus (strain AH187), this protein is Thymidine kinase.